Consider the following 190-residue polypeptide: Threonylcarbamoyl-AMP synthase (190 aa).

The 184-residue stretch at 7–190 (TGSIAAAVDL…ALTGELFRQG (184 aa)) folds into the YrdC-like domain.

This sequence belongs to the SUA5 family. TsaC subfamily.

The protein localises to the cytoplasm. The catalysed reaction is L-threonine + hydrogencarbonate + ATP = L-threonylcarbamoyladenylate + diphosphate + H2O. Its function is as follows. Required for the formation of a threonylcarbamoyl group on adenosine at position 37 (t(6)A37) in tRNAs that read codons beginning with adenine. Catalyzes the conversion of L-threonine, HCO(3)(-)/CO(2) and ATP to give threonylcarbamoyl-AMP (TC-AMP) as the acyladenylate intermediate, with the release of diphosphate. The protein is Threonylcarbamoyl-AMP synthase of Salmonella arizonae (strain ATCC BAA-731 / CDC346-86 / RSK2980).